The sequence spans 727 residues: Broad-complex core protein isoforms 1/2/3/4/5 (727 aa).

Residues 32–97 (VDVTLACEGR…IYHGEVNVHQ (66 aa)) form the BTB domain. Over residues 135-149 (NSGGRTPLNTHTQSL) the composition is skewed to polar residues. Disordered regions lie at residues 135–185 (NSGG…SLPS), 218–378 (RGSD…IGDG), 445–496 (INNS…RPTA), 532–583 (PQQQ…ANTP), and 604–626 (STSGSANSSLNNSNSTLNTSGGL). A compositionally biased stretch (low complexity) spans 227-238 (SGAVGSGSNNNS). Gly residues predominate over residues 281-298 (TGNGNSGNGNGNGNGASN). A compositionally biased stretch (basic and acidic residues) spans 341–355 (NDEHSNDSTGEHDAN). Composition is skewed to low complexity over residues 445-460 (INNSITNNNNNNNNNN), 475-495 (TPSPTTTTLTTPTTTTPTRPT), and 533-568 (QQQQQQQQQHQMSQQQQQQQQQQQQQGNSSSGQQQQ). 2 consecutive C2H2-type zinc fingers follow at residues 636-659 (FRCNPCNKNLSSLTRLKRHIQNVH) and 666-689 (PVCNICKRVYSSLNSLRNHKSIYH). A disordered region spans residues 694–727 (QPKQEPGVGATQAAANSFYHQQHQQQQLNHHSSS). Over residues 713–727 (HQQHQQQQLNHHSSS) the composition is skewed to low complexity.

It is found in the nucleus. Broad-complex proteins are required for puffing and transcription of salivary gland late genes during metamorphosis. This is Broad-complex core protein isoforms 1/2/3/4/5 (br) from Drosophila melanogaster (Fruit fly).